Consider the following 170-residue polypeptide: ATP synthase subunit b (170 aa).

The chain crosses the membrane as a helical span at residues 11-31; sequence AFTFGDAFFTLFAFAILLVLI.

It belongs to the ATPase B chain family. F-type ATPases have 2 components, F(1) - the catalytic core - and F(0) - the membrane proton channel. F(1) has five subunits: alpha(3), beta(3), gamma(1), delta(1), epsilon(1). F(0) has three main subunits: a(1), b(2) and c(10-14). The alpha and beta chains form an alternating ring which encloses part of the gamma chain. F(1) is attached to F(0) by a central stalk formed by the gamma and epsilon chains, while a peripheral stalk is formed by the delta and b chains.

It localises to the cell membrane. In terms of biological role, f(1)F(0) ATP synthase produces ATP from ADP in the presence of a proton or sodium gradient. F-type ATPases consist of two structural domains, F(1) containing the extramembraneous catalytic core and F(0) containing the membrane proton channel, linked together by a central stalk and a peripheral stalk. During catalysis, ATP synthesis in the catalytic domain of F(1) is coupled via a rotary mechanism of the central stalk subunits to proton translocation. Its function is as follows. Component of the F(0) channel, it forms part of the peripheral stalk, linking F(1) to F(0). This is ATP synthase subunit b from Listeria innocua serovar 6a (strain ATCC BAA-680 / CLIP 11262).